A 202-amino-acid chain; its full sequence is uncharacterized protein (202 aa).

The protein resides in the mitochondrion. This is an uncharacterized protein from Schizosaccharomyces pombe (strain 972 / ATCC 24843) (Fission yeast).